We begin with the raw amino-acid sequence, 394 residues long: Probable fimbrial assembly protein FimD, serogroup H1 (394 aa).

The polypeptide is Probable fimbrial assembly protein FimD, serogroup H1 (fimD) (Dichelobacter nodosus (Bacteroides nodosus)).